A 220-amino-acid polypeptide reads, in one-letter code: Glutamine amidotransferase-like class 1 domain-containing protein 1 (220 aa).

The N-terminal stretch at 1–35 (MASERLPSRPACLLVASGAAEGVSAQSFLHCFTLA) is a signal peptide. N57 and N201 each carry an N-linked (GlcNAc...) asparagine glycan.

This sequence belongs to the peptidase C56 family. Homotetramer. Component of the FERRY complex composed of five subunits, TBCK, PPP1R21, FERRY3, CRYZL1 and GATD1 with a ratio of 1:2:1:2:4, respectively.

It localises to the secreted. It is found in the early endosome. Its function is as follows. Component of the FERRY complex (Five-subunit Endosomal Rab5 and RNA/ribosome intermediary). The FERRY complex directly interacts with mRNAs and RAB5A, and functions as a RAB5A effector involved in the localization and the distribution of specific mRNAs most likely by mediating their endosomal transport. The complex recruits mRNAs and ribosomes to early endosomes through direct mRNA-interaction. This is Glutamine amidotransferase-like class 1 domain-containing protein 1 from Bos taurus (Bovine).